The chain runs to 764 residues: MKPFQGITFCPTAINNEILAKKISKKIIKLGGIFSKDLTRQVNVLVVGSTTNTNKFKFAVKHRFDIIFIDIQAIDDIYQLWLSGENILPDSNTATMTGSTYEMLKILYRRFSFKYLHNFNIFIGRITDTNITSIDSLVRSIKKLGCSSYNYQNFVIKDTSSHNDDDDQGQNGQISIFVTDTLLGARVNAAIEQNIPIVHFKWILDCQKRSALLPYDPYYLLPNIKDLPYDSIGSNSCDCWDKINTTFPTNIDAQSSLQRQQSSSTLTPSLPKTSSLLNKFKPKGEKIWDKAMSLQQHSKTNFSVLGQSPLSINNKQEDLSDNSTLIFKNCAFIIHHIFPGNHRSILTKIVVQNGGKIETSYLSGIYDHSYYIIPSNKALDSFNDLPEIIDDNDGIVTEFFIERCLYYQKLLHPIDLWSKPFLSTIEFQVSSSSKLLHHEFSSSPFLNVTITGFSGVELLHLTKVLNLLKPMGINYVEYLNKSTDILLINLAALPSIPKTHPLWSNEFSDLFTQFCINNNNDDPGDNNRKDFQNNSILRNSMKRKIEYIKKFHSIPVVTPAFIFKLLSAASGENNEIFLNNIKWCIICPRGHKDDFKCKIKKPYYTSISSEKKYQNNDPKIDKTILLKRNNSSLSEHSMKDTKNELLQKIRETDSGRKKRSVSSSIMDVSSERQMPDTKRIKLESLPKNFVPKQIKRTTSWGTIMSENVPTEQPTAISNPEEIPRTEEVSHTQVTYGSIQDKKRTASLEKPMRRQTRNQTKELDS.

BRCT domains are found at residues 1-99 (MKPF…MTGS), 129-220 (TNIT…PYYL), and 322-418 (NSTL…DLWS). 2 disordered regions span residues 651–675 (ETDSGRKKRSVSSSIMDVSSERQMP) and 710–764 (TEQP…ELDS). A compositionally biased stretch (basic and acidic residues) spans 739-751 (QDKKRTASLEKPM).

In terms of assembly, interacts with SLD2.

The protein localises to the nucleus. Has a role in the initiation of DNA replication. Required at S-phase checkpoint. Required for the association of PSF1 with origins. Also required for the proper activation of RAD53 in response to DNA damage and replication blocks. Multicopy suppressor of DPB2 mutation. Overexpression restores the growth defect conferred by POL2 mutation. In Saccharomyces cerevisiae (strain ATCC 204508 / S288c) (Baker's yeast), this protein is DNA replication regulator DPB11 (DPB11).